The following is a 220-amino-acid chain: Uracil-DNA glycosylase (220 aa).

Aspartate 60 acts as the Proton acceptor in catalysis.

Belongs to the uracil-DNA glycosylase (UDG) superfamily. UNG family.

It localises to the cytoplasm. The catalysed reaction is Hydrolyzes single-stranded DNA or mismatched double-stranded DNA and polynucleotides, releasing free uracil.. Its function is as follows. Excises uracil residues from the DNA which can arise as a result of misincorporation of dUMP residues by DNA polymerase or due to deamination of cytosine. In Francisella tularensis subsp. holarctica (strain FTNF002-00 / FTA), this protein is Uracil-DNA glycosylase.